The sequence spans 328 residues: Probable fused nickel transport protein LarMN (328 aa).

A run of 8 helical transmembrane segments spans residues 8 to 28 (LSPATCGTLVTAMAPVWTVAV), 42 to 62 (LPMLGIAASLAFLIMMFNLPI), 75 to 95 (LLAVLIGPWAACLALTVTLLL), 103 to 123 (GGILAFGANALNMAVIMPFVG), 138 to 158 (LGLAIGAYLGINMAALVAGIE), 187 to 207 (MLTAHLLVAGWVEVVFTLLVF), 229 to 249 (PWIALLLGLAVLSPLGLLASN), and 296 to 316 (PVSVGYILSAITAVLIFLLLI).

Belongs to the CbiM family. NikM subfamily. May form an energy-coupling factor (ECF) transporter complex composed of an ATP-binding protein (A component, LarO), a transmembrane protein (T component, LarQ) and a fused possible substrate-capture protein (S component, LarMN) of unknown stoichiometry.

The protein resides in the cell membrane. Its function is as follows. Probably part of the energy-coupling factor (ECF) transporter complex LarMNQO involved in nickel import. In Lactiplantibacillus plantarum (strain ATCC BAA-793 / NCIMB 8826 / WCFS1) (Lactobacillus plantarum), this protein is Probable fused nickel transport protein LarMN.